We begin with the raw amino-acid sequence, 142 residues long: Large ribosomal subunit protein bL17 (142 aa).

Belongs to the bacterial ribosomal protein bL17 family. Part of the 50S ribosomal subunit. Contacts protein L32.

The sequence is that of Large ribosomal subunit protein bL17 from Chlamydia pneumoniae (Chlamydophila pneumoniae).